Here is a 33-residue protein sequence, read N- to C-terminus: Photosystem II reaction center protein Psb30 (33 aa).

The helical transmembrane segment at 5 to 25 threads the bilayer; it reads LIGQLVTVALVVGAGPIIIGA.

It belongs to the Psb30/Ycf12 family. PSII is composed of 1 copy each of membrane proteins PsbA, PsbB, PsbC, PsbD, PsbE, PsbF, PsbH, PsbI, PsbJ, PsbK, PsbL, PsbM, PsbT, PsbX, PsbY, PsbZ, Psb30/Ycf12, peripheral proteins of the oxygen-evolving complex and a large number of cofactors. It forms dimeric complexes.

The protein resides in the plastid. It is found in the chloroplast thylakoid membrane. Functionally, a core subunit of photosystem II (PSII), probably helps stabilize the reaction center. The protein is Photosystem II reaction center protein Psb30 of Ostreococcus tauri.